The following is a 136-amino-acid chain: Small ribosomal subunit protein uS9 (136 aa).

The protein belongs to the universal ribosomal protein uS9 family.

The sequence is that of Small ribosomal subunit protein uS9 from Synechococcus sp. (strain JA-2-3B'a(2-13)) (Cyanobacteria bacterium Yellowstone B-Prime).